The primary structure comprises 257 residues: Imidazole glycerol phosphate synthase subunit HisF (257 aa).

Catalysis depends on residues Asp12 and Asp131.

It belongs to the HisA/HisF family. In terms of assembly, heterodimer of HisH and HisF.

The protein localises to the cytoplasm. It catalyses the reaction 5-[(5-phospho-1-deoxy-D-ribulos-1-ylimino)methylamino]-1-(5-phospho-beta-D-ribosyl)imidazole-4-carboxamide + L-glutamine = D-erythro-1-(imidazol-4-yl)glycerol 3-phosphate + 5-amino-1-(5-phospho-beta-D-ribosyl)imidazole-4-carboxamide + L-glutamate + H(+). It participates in amino-acid biosynthesis; L-histidine biosynthesis; L-histidine from 5-phospho-alpha-D-ribose 1-diphosphate: step 5/9. Its function is as follows. IGPS catalyzes the conversion of PRFAR and glutamine to IGP, AICAR and glutamate. The HisF subunit catalyzes the cyclization activity that produces IGP and AICAR from PRFAR using the ammonia provided by the HisH subunit. The polypeptide is Imidazole glycerol phosphate synthase subunit HisF (Paraburkholderia phytofirmans (strain DSM 17436 / LMG 22146 / PsJN) (Burkholderia phytofirmans)).